Here is a 1135-residue protein sequence, read N- to C-terminus: Envelopment polyprotein (1135 aa).

The signal sequence occupies residues 1–35; it reads MRILKLLELVVKVSLFTIALSSVLLAFLTFRATDA. Over 36–314 the chain is Lumenal; sequence KVEIIRGDHP…KYSKSIYKQT (279 aa). Residues 41-43 carry the Cell attachment site motif; the sequence is RGD. A glycan (N-linked (GlcNAc...) asparagine; by host) is linked at asparagine 116. The cysteines at positions 122 and 156 are disulfide-linked. Residues 177-195 form a non-covalent dimerization region; sequence LDNKRHFSVGTNFFIPESL. Asparagine 210 carries N-linked (GlcNAc...) asparagine; by host glycosylation. The cysteines at positions 224 and 285 are disulfide-linked. A helical membrane pass occupies residues 315–366; it reads ACINFSWIRLILIALLIYFPIRWLVNKTTKPLFLWYDLMGLITYPVLLLINC. Residues 367-484 are Cytoplasmic-facing; that stretch reads LWKYFPFKCS…VPGCPFLVTS (118 aa). The signal for signal peptide peptidase stretch occupies residues 437–484; that stretch reads LSLSLLKFVTEILIGLVILSQIPMSMAQTTQCLSGCFYVPGCPFLVTS. Residues 485–1067 lie on the Lumenal side of the membrane; that stretch reads KFEKCPEKDQ…YFGSFFDTIR (583 aa). N-linked (GlcNAc...) asparagine; by host glycans are attached at residues asparagine 588, asparagine 605, and asparagine 980. Residues 1068–1088 traverse the membrane as a helical segment; that stretch reads VVLLIAFIFLVIYFCSILTSI. Residues 1089–1135 are Cytoplasmic-facing; it reads CKGYVKHKSYKSRSKIEDDDEPEIKAPMLMKDTMTRRRPPMDFSHLV.

Belongs to the tospovirus envelope glycoprotein family. In terms of assembly, homodimer; disulfide-linked. Heterodimer with Glycoprotein C. Interacts with nucleoprotein. Heterodimer with Glycoprotein N. Interacts with nucleoprotein. Specific enzymatic cleavages in vivo yield mature proteins including Glycoprotein N and Glycoprotein C. Post-translationally, glycosylated with O-linked glycans. Glycosylation is essential for proper subcellular location. In terms of processing, cleaved at acidic pH.

The protein resides in the virion membrane. It is found in the host Golgi apparatus membrane. Its subcellular location is the host endoplasmic reticulum membrane. In terms of biological role, forms the spikes present at the surface of the virion together with Glycoprotein C. They are able to attach the virion to a cell receptor and to promote fusion of membranes after endocytosis of the virion. Plays a role in virus binding and/or entry into the vector midgut. Functionally, forms the spikes present at the surface of the virion together with Glycoprotein N. They are able to attach the virion to a cell receptor and to promote fusion of membranes after endocytosis of the virion. Probable class II fusion protein. The sequence is that of Envelopment polyprotein (GP) from Frankliniella occidentalis (Western flower thrips).